The chain runs to 357 residues: UDP-N-acetylglucosamine--N-acetylmuramyl-(pentapeptide) pyrophosphoryl-undecaprenol N-acetylglucosamine transferase (357 aa).

Residues 10-12 (TGG), Asn-124, Ser-189, Ile-244, and Gln-289 each bind UDP-N-acetyl-alpha-D-glucosamine.

Belongs to the glycosyltransferase 28 family. MurG subfamily.

The protein resides in the cell membrane. The catalysed reaction is Mur2Ac(oyl-L-Ala-gamma-D-Glu-L-Lys-D-Ala-D-Ala)-di-trans,octa-cis-undecaprenyl diphosphate + UDP-N-acetyl-alpha-D-glucosamine = beta-D-GlcNAc-(1-&gt;4)-Mur2Ac(oyl-L-Ala-gamma-D-Glu-L-Lys-D-Ala-D-Ala)-di-trans,octa-cis-undecaprenyl diphosphate + UDP + H(+). It functions in the pathway cell wall biogenesis; peptidoglycan biosynthesis. Functionally, cell wall formation. Catalyzes the transfer of a GlcNAc subunit on undecaprenyl-pyrophosphoryl-MurNAc-pentapeptide (lipid intermediate I) to form undecaprenyl-pyrophosphoryl-MurNAc-(pentapeptide)GlcNAc (lipid intermediate II). The protein is UDP-N-acetylglucosamine--N-acetylmuramyl-(pentapeptide) pyrophosphoryl-undecaprenol N-acetylglucosamine transferase of Lactococcus lactis subsp. cremoris (strain MG1363).